A 334-amino-acid polypeptide reads, in one-letter code: Phosphoribosylformylglycinamidine cyclo-ligase (334 aa).

Belongs to the AIR synthase family.

Its subcellular location is the cytoplasm. It carries out the reaction 2-formamido-N(1)-(5-O-phospho-beta-D-ribosyl)acetamidine + ATP = 5-amino-1-(5-phospho-beta-D-ribosyl)imidazole + ADP + phosphate + H(+). Its pathway is purine metabolism; IMP biosynthesis via de novo pathway; 5-amino-1-(5-phospho-D-ribosyl)imidazole from N(2)-formyl-N(1)-(5-phospho-D-ribosyl)glycinamide: step 2/2. This Thermococcus gammatolerans (strain DSM 15229 / JCM 11827 / EJ3) protein is Phosphoribosylformylglycinamidine cyclo-ligase.